A 374-amino-acid chain; its full sequence is DNA replication and repair protein RecF (374 aa).

Residue 34 to 41 (GDNGAGKT) participates in ATP binding.

The protein belongs to the RecF family.

The protein resides in the cytoplasm. In terms of biological role, the RecF protein is involved in DNA metabolism; it is required for DNA replication and normal SOS inducibility. RecF binds preferentially to single-stranded, linear DNA. It also seems to bind ATP. In Rhizobium leguminosarum bv. trifolii (strain WSM2304), this protein is DNA replication and repair protein RecF.